The sequence spans 689 residues: Glycine--tRNA ligase beta subunit (689 aa).

The protein belongs to the class-II aminoacyl-tRNA synthetase family. Tetramer of two alpha and two beta subunits.

It localises to the cytoplasm. It catalyses the reaction tRNA(Gly) + glycine + ATP = glycyl-tRNA(Gly) + AMP + diphosphate. This is Glycine--tRNA ligase beta subunit from Glaesserella parasuis serovar 5 (strain SH0165) (Haemophilus parasuis).